Here is a 94-residue protein sequence, read N- to C-terminus: Core protein OPG142 (94 aa).

The protein belongs to the orthopoxvirus OPG142 family. Part of a complex composed of the kinase OPG054, OPG092, OPG100, OPG114, OPG115, OPG142 and OPG157.

Its subcellular location is the host cytoplasm. It is found in the virion. Late protein which is a part of a large complex required for early virion morphogenesis. This complex participates in the formation of virosomes and the incorporation of virosomal contents into nascent immature virions. Required for the stability and kinase activity of OPG054. In Vaccinia virus (strain Ankara) (VACV), this protein is Core protein OPG142 (OPG142).